Reading from the N-terminus, the 430-residue chain is Transcriptional regulatory protein RXT2 (430 aa).

Positions 408-430 are disordered; the sequence is EIENTMEDGVVDDNEPDEEANRA.

The protein belongs to the RXT2 family. Component of the RPD3C(L) complex composed of at least ASH1, CTI6, DEP1, PHO23, RPD3, RXT2, RXT3, SAP30, SDS3, SIN3, UME1 and UME6.

It is found in the nucleus. Component of the RPD3C(L) histone deacetylase complex (HDAC) responsible for the deacetylation of lysine residues on the N-terminal part of the core histones (H2A, H2B, H3 and H4). Histone deacetylation gives a tag for epigenetic repression and plays an important role in transcriptional regulation, cell cycle progression and developmental events. The sequence is that of Transcriptional regulatory protein RXT2 (RXT2) from Saccharomyces cerevisiae (strain ATCC 204508 / S288c) (Baker's yeast).